The sequence spans 641 residues: Methionine--tRNA ligase (641 aa).

A 'HIGH' region motif is present at residues 13–23 (YYPSAKLHIGN). Zn(2+) is bound by residues C128, C131, C145, and C148. Residues 298–302 (KMSKS) carry the 'KMSKS' region motif. K301 serves as a coordination point for ATP. A tRNA-binding domain is found at 539–641 (DFDKIDLRVV…GELPTGSQVR (103 aa)).

This sequence belongs to the class-I aminoacyl-tRNA synthetase family. MetG type 2A subfamily. Homodimer. The cofactor is Zn(2+).

It localises to the cytoplasm. The enzyme catalyses tRNA(Met) + L-methionine + ATP = L-methionyl-tRNA(Met) + AMP + diphosphate. Functionally, is required not only for elongation of protein synthesis but also for the initiation of all mRNA translation through initiator tRNA(fMet) aminoacylation. The chain is Methionine--tRNA ligase from Clostridium tetani (strain Massachusetts / E88).